The following is a 221-amino-acid chain: Putative efflux system component YhbJ (221 aa).

Residues 17–37 traverse the membrane as a helical segment; it reads LILTNIIGLIVVLAIIAGGAY.

The protein belongs to the membrane fusion protein (MFP) (TC 8.A.1) family.

It is found in the cell membrane. This Bacillus subtilis (strain 168) protein is Putative efflux system component YhbJ (yhbJ).